A 195-amino-acid polypeptide reads, in one-letter code: Rac-like GTP-binding protein ARAC4 (195 aa).

Residues 12 to 19 (GDGAVGKT), 30 to 37 (FPTDYVPT), 59 to 63 (DTAGQ), and 117 to 120 (TKLD) each bind GTP. The Effector region signature appears at 34-42 (YVPTVFDNF). Position 192 is a cysteine methyl ester (C192). Residue C192 is the site of S-geranylgeranyl cysteine attachment. The propeptide at 193 to 195 (AFL) is removed in mature form.

Belongs to the small GTPase superfamily. Rho family. Interacts with SPK1, ICR1, ICR5 and PIR. As to expression, ubiquitous.

The protein resides in the cytoplasm. It is found in the cell membrane. Functionally, inactive GDP-bound Rho GTPases reside in the cytosol, are found in a complex with Rho GDP-dissociation inhibitors (Rho GDIs), and are released from the GDI protein in order to translocate to membranes upon activation. Involved in cell polarity control during the actin-dependent tip growth of root hairs, thus regulating root hair length and root hair initiation. Contributes, in a SPK1-dependent manner, to the prevention of cortical microtubules organization into parallel arrays oriented perpendicular to the axis of cell elongation to limit anisotropic cell growth during petal development. May regulate a WAVE complex that activates the Arp2/3 complex. The sequence is that of Rac-like GTP-binding protein ARAC4 from Arabidopsis thaliana (Mouse-ear cress).